The chain runs to 195 residues: Probable GTP-binding protein EngB (195 aa).

Positions 24 to 195 (DWPEIALAGR…EAWEAILRYL (172 aa)) constitute an EngB-type G domain. Residues 32 to 39 (GRSNVGKS), 59 to 63 (GKTQL), 77 to 80 (DVPG), 144 to 147 (TKAD), and 176 to 178 (FSS) contribute to the GTP site. Ser-39 and Thr-61 together coordinate Mg(2+).

Belongs to the TRAFAC class TrmE-Era-EngA-EngB-Septin-like GTPase superfamily. EngB GTPase family. Requires Mg(2+) as cofactor.

Necessary for normal cell division and for the maintenance of normal septation. The chain is Probable GTP-binding protein EngB from Lactococcus lactis subsp. lactis (strain IL1403) (Streptococcus lactis).